Reading from the N-terminus, the 1625-residue chain is E3 ubiquitin-protein ligase KEG (1625 aa).

The RING-type zinc finger occupies 10 to 56 (CSVCHTRYNEDERVPLLLQCGHGFCKDCLSKMFSTSSDTTLTCPRCR). The span at 91 to 106 (YTDDEDDDDEEDGSDE) shows a compositional bias: acidic residues. The segment at 91-110 (YTDDEDDDDEEDGSDEDGAR) is disordered. The Protein kinase domain occupies 141–427 (RQIGEESSSG…TFNAMLATFL (287 aa)). Residues 147-155 (SSSGGFGGV) and Lys-176 each bind ATP. ANK repeat units lie at residues 467 to 496 (DNPNNLHRVVLEGDFEGVRNILAKAAAGGG), 510 to 540 (DGQSALHLACRRGSAELVEAILEYGEANVDI), 544 to 573 (DGDPPLVFALAAGSPQCVHVLIKKGANVRS), 579 to 608 (SGPSVAHVCSYHGQPDCMRELLVAGADPNA), 612 to 641 (EGETVLHRAVAKKYTDCAIVILENGGSRSM), 647 to 676 (KCLTPLHMCVATWNVAVIKRWVEVSSPEEI), 685 to 720 (PVGTALCMAASIRKDHEKEGRELVQILLAAGADPTA), 725 to 754 (HGRTALHTAAMANNVELVRVILDAGVNANI), 758 to 787 (HNTIPLHMALARGANSCVSLLLESGSDCNI), 791 to 826 (EGDNAFHIAADAAKMIRENLDWLIVMLRSPDAAVDV), and 832 to 863 (KTVRDFLEALPREWISEDLMEALLKRGVHLSP).

As to quaternary structure, interacts with ABI5 and EDR1. In terms of processing, autophosphotylated and autoubiquitinated in vitro. Phosphorylation enhances self-ubiquitination. Post-translationally, autoubiquitinated in response to abscisic acid (ABA) and subsequently targeted to proteolysis. As to expression, expressed in all tissues of young seedlings. In flowering plants, only detected in the youngest part of the stem, anthers and the receptacle of immature siliques. Not found in mature leave, older parts of the stem, flower parts other than anthers or mature siliques.

The protein resides in the golgi apparatus. It localises to the trans-Golgi network. The protein localises to the early endosome. The catalysed reaction is L-seryl-[protein] + ATP = O-phospho-L-seryl-[protein] + ADP + H(+). It carries out the reaction L-threonyl-[protein] + ATP = O-phospho-L-threonyl-[protein] + ADP + H(+). The enzyme catalyses S-ubiquitinyl-[E2 ubiquitin-conjugating enzyme]-L-cysteine + [acceptor protein]-L-lysine = [E2 ubiquitin-conjugating enzyme]-L-cysteine + N(6)-ubiquitinyl-[acceptor protein]-L-lysine.. The protein operates within protein modification; protein ubiquitination. Its function is as follows. Mediates E2-dependent protein ubiquitination. Acts as a negative regulator of abscisic acid signaling. Required for ABI5 degradation, by mediating its ubiquitination. Together with EDR1, may regulate endocytic trafficking and/or the formation of signaling complexes on trans-Golgi network (TGN)/ early endosome (EE) vesicles during stress responses. This chain is E3 ubiquitin-protein ligase KEG (KEG), found in Arabidopsis thaliana (Mouse-ear cress).